The chain runs to 188 residues: Protein CRIPTO3 (188 aa).

The 30-residue stretch at 78–107 (LNRTCCLNGGTCMLESFCACPPSFYGRNCE) folds into the EGF-like domain. N79 carries an N-linked (GlcNAc...) asparagine glycan. Intrachain disulfides connect C82-C89, C83-C95, C97-C106, C115-C133, C128-C149, and C131-C140.

Belongs to the EGF-CFC (Cripto-1/FRL1/Cryptic) family. Expressed weakly in lung, colon and breast. Expressed also strongly in primary cancer tissues; lung and colon cancers.

It is found in the cell membrane. Functionally, could play a role in the determination of the epiblastic cells that subsequently give rise to the mesoderm. Activates the Nodal-dependent signaling pathway. In Homo sapiens (Human), this protein is Protein CRIPTO3.